A 256-amino-acid polypeptide reads, in one-letter code: Triosephosphate isomerase (256 aa).

9-11 is a substrate binding site; the sequence is NWK. His97 acts as the Electrophile in catalysis. Glu169 acts as the Proton acceptor in catalysis. Substrate-binding positions include Gly175, Ser214, and 235-236; that span reads GG.

The protein belongs to the triosephosphate isomerase family. As to quaternary structure, homodimer.

The protein localises to the cytoplasm. The catalysed reaction is D-glyceraldehyde 3-phosphate = dihydroxyacetone phosphate. It participates in carbohydrate biosynthesis; gluconeogenesis. It functions in the pathway carbohydrate degradation; glycolysis; D-glyceraldehyde 3-phosphate from glycerone phosphate: step 1/1. Its function is as follows. Involved in the gluconeogenesis. Catalyzes stereospecifically the conversion of dihydroxyacetone phosphate (DHAP) to D-glyceraldehyde-3-phosphate (G3P). The polypeptide is Triosephosphate isomerase (Aliivibrio salmonicida (strain LFI1238) (Vibrio salmonicida (strain LFI1238))).